The sequence spans 796 residues: Exocyst complex component 3 (796 aa).

The stretch at 87 to 174 (PQLKEKLREL…GTNTEKEQML (88 aa)) forms a coiled coil.

This sequence belongs to the SEC6 family. The exocyst complex is composed of sec-3/exoc1, sec-5/exoc2, sec-6/exoc3, sec-8/exoc4, sec-10/exoc5, sec-15/exoc6, exo-70/exoc7 and exo-84/exoc8.

Functionally, component of the exocyst complex involved in the docking of exocytic vesicles with fusion sites on the plasma membrane. In Caenorhabditis elegans, this protein is Exocyst complex component 3 (sec-6).